The sequence spans 673 residues: DNA ligase (673 aa).

Residues 32 to 36 (DAEYD), 81 to 82 (SL), and glutamate 113 each bind NAD(+). The active-site N6-AMP-lysine intermediate is lysine 115. NAD(+)-binding residues include arginine 136, glutamate 173, lysine 290, and lysine 314. Residues cysteine 408, cysteine 411, cysteine 426, and cysteine 432 each coordinate Zn(2+). The BRCT domain occupies 595 to 673 (EIDSPFAGKT…EAEMIRLLGA (79 aa)).

The protein belongs to the NAD-dependent DNA ligase family. LigA subfamily. Requires Mg(2+) as cofactor. Mn(2+) is required as a cofactor.

The enzyme catalyses NAD(+) + (deoxyribonucleotide)n-3'-hydroxyl + 5'-phospho-(deoxyribonucleotide)m = (deoxyribonucleotide)n+m + AMP + beta-nicotinamide D-nucleotide.. Functionally, DNA ligase that catalyzes the formation of phosphodiester linkages between 5'-phosphoryl and 3'-hydroxyl groups in double-stranded DNA using NAD as a coenzyme and as the energy source for the reaction. It is essential for DNA replication and repair of damaged DNA. This Serratia proteamaculans (strain 568) protein is DNA ligase.